A 439-amino-acid polypeptide reads, in one-letter code: 26S proteasome regulatory subunit 6A (439 aa).

Residue methionine 1 is modified to N-acetylmethionine. Position 9 is a phosphoserine (serine 9). ATP is bound at residue 227 to 234 (GPPGTGKT). Residue serine 376 is modified to Phosphoserine.

This sequence belongs to the AAA ATPase family. As to quaternary structure, component of the 19S proteasome regulatory particle complex. The 26S proteasome consists of a 20S core particle (CP) and two 19S regulatory subunits (RP). The regulatory particle is made of a lid composed of 9 subunits, a base containing 6 ATPases including PSMC3 and few additional components. Interacts with PAAF1. In terms of assembly, (Microbial infection) Interacts with HIV-1 Tat. Post-translationally, sumoylated by UBE2I in response to MEKK1-mediated stimuli.

It is found in the cytoplasm. The protein resides in the nucleus. Component of the 26S proteasome, a multiprotein complex involved in the ATP-dependent degradation of ubiquitinated proteins. This complex plays a key role in the maintenance of protein homeostasis by removing misfolded or damaged proteins, which could impair cellular functions, and by removing proteins whose functions are no longer required. Therefore, the proteasome participates in numerous cellular processes, including cell cycle progression, apoptosis, or DNA damage repair. PSMC3 belongs to the heterohexameric ring of AAA (ATPases associated with diverse cellular activities) proteins that unfolds ubiquitinated target proteins that are concurrently translocated into a proteolytic chamber and degraded into peptides. The sequence is that of 26S proteasome regulatory subunit 6A (PSMC3) from Homo sapiens (Human).